Reading from the N-terminus, the 335-residue chain is Ornithine carbamoyltransferase (335 aa).

Carbamoyl phosphate contacts are provided by residues 56–59, Gln-83, Arg-107, and 134–137; these read STRT and HPTQ. L-ornithine contacts are provided by residues Asn-168, Asp-232, and 236–237; that span reads SM. Residues 274-275 and Arg-320 contribute to the carbamoyl phosphate site; that span reads CL.

Belongs to the aspartate/ornithine carbamoyltransferase superfamily. OTCase family.

The protein localises to the cytoplasm. The enzyme catalyses carbamoyl phosphate + L-ornithine = L-citrulline + phosphate + H(+). It participates in amino-acid biosynthesis; L-arginine biosynthesis; L-arginine from L-ornithine and carbamoyl phosphate: step 1/3. Functionally, reversibly catalyzes the transfer of the carbamoyl group from carbamoyl phosphate (CP) to the N(epsilon) atom of ornithine (ORN) to produce L-citrulline. This Pectobacterium atrosepticum (strain SCRI 1043 / ATCC BAA-672) (Erwinia carotovora subsp. atroseptica) protein is Ornithine carbamoyltransferase.